The primary structure comprises 365 residues: MMGSVLPAEALVLKTGLKAPGLALAEVITSDILHSFLYGRWRNVLGEQLLEDKSHHASPKTAFTAEVLAQSFSGEVQKLSSLVLPVEVIIAQSSIPGEGLGIFSKTWIKAGTEMGPFTGRVIAPEHVDICKNNNLMWEVFNEDGTVRYFIDASQEDHRSWMTYIKCARNEQEQNLEVVQIGTSIFYKAIEMIPPDQELLVWYGNSHNTFLGIPGVPGLEEEQKKNKHEDFHPADSATGTAGRMRCVICHRGFNSRSNLRSHMRIHTLDKPFVCRFCNRRFSQSSTLRNHVRLHTGERPYKCQVCQSAYSQLAGLRAHQKSARHRPPSTALQAHSPALPAPHAHAPALAAAAAAAAAAHHLPAMVL.

Residues 86-203 enclose the SET domain; it reads VEVIIAQSSI…PDQELLVWYG (118 aa). 3 consecutive C2H2-type zinc fingers follow at residues 243-265, 271-293, and 299-323; these read MRCV…MRIH, FVCR…VRLH, and YKCQ…SARH. Positions 318–338 are disordered; that stretch reads QKSARHRPPSTALQAHSPALP. The span at 329–338 shows a compositional bias: low complexity; that stretch reads ALQAHSPALP.

Belongs to the class V-like SAM-binding methyltransferase superfamily. In terms of assembly, interacts with EHMT2.

The protein localises to the nucleus. In terms of biological role, transcriptional regulator necessary for the development of nociceptive neurons, playing a key role in determining the nociceptive lineage from neural crest cell progenitors. Initiates neurogenesis and activates downstream pro-neuronal transcription factors, such as NEUROD1, BRN3A, and ISL1, specifically within nociceptive neurons, while repressing non-nociceptor cell fates. Essential for the proper function of nociceptors in adults, influencing both their excitability and their gene expression, thereby impacting how these neurons respond to various pain stimuli. This chain is PR domain zinc finger protein 12 (Prdm12), found in Mus musculus (Mouse).